The chain runs to 213 residues: Protein-L-isoaspartate O-methyltransferase (213 aa).

Serine 60 is a catalytic residue.

Belongs to the methyltransferase superfamily. L-isoaspartyl/D-aspartyl protein methyltransferase family.

The protein localises to the cytoplasm. The enzyme catalyses [protein]-L-isoaspartate + S-adenosyl-L-methionine = [protein]-L-isoaspartate alpha-methyl ester + S-adenosyl-L-homocysteine. Catalyzes the methyl esterification of L-isoaspartyl residues in peptides and proteins that result from spontaneous decomposition of normal L-aspartyl and L-asparaginyl residues. It plays a role in the repair and/or degradation of damaged proteins. This chain is Protein-L-isoaspartate O-methyltransferase, found in Roseobacter denitrificans (strain ATCC 33942 / OCh 114) (Erythrobacter sp. (strain OCh 114)).